The sequence spans 1905 residues: Transport and Golgi organization protein 1 homolog (1905 aa).

The signal sequence occupies residues 1–22 (MAAAQGLLFWLLLLGPPCRVPG). The Lumenal segment spans residues 23–1141 (QPEQDPGRRF…EPASVTPLEN (1119 aa)). The region spanning 45 to 107 (MLMYRGEALE…PKDLIQVVHE (63 aa)) is the SH3 domain. The segment covering 154–167 (SEKVKEKTAQRVEE) has biased composition (basic and acidic residues). Disordered regions lie at residues 154-259 (SEKV…HEQE) and 313-621 (TVGK…IKDR). Residue Asn-173 is glycosylated (N-linked (GlcNAc...) asparagine). Residues 173–190 (NESDAEPEPGEPNSEESE) show a composition bias toward acidic residues. Positions 198 to 208 (AELRERSEAQK) are enriched in basic and acidic residues. The span at 209–220 (SHPQVNSQTGHA) shows a compositional bias: polar residues. Ser-226 and Ser-229 each carry phosphoserine. Residues 234–245 (LQDKLKVPDSEN) are compositionally biased toward basic and acidic residues. N-linked (GlcNAc...) asparagine glycosylation is present at Asn-246. A compositionally biased stretch (polar residues) spans 246 to 255 (NKTSNSSQVS). Acidic residues predominate over residues 317–327 (EEEENKEDFDE). Basic and acidic residues-rich tracts occupy residues 337 to 366 (EDTK…KVEE) and 373 to 386 (KKGD…REDT). Acidic residues predominate over residues 392–414 (MEGEENTDTDLESSDSKEEDDPL). 2 stretches are compositionally biased toward basic and acidic residues: residues 419 to 436 (RLGK…KAAD) and 459 to 480 (HMKD…HEVG). A coiled-coil region spans residues 467-527 (VEEPRRDWVQ…ANQENDLKGA (61 aa)). Residues 488-500 (DQAVQGSSQSGHL) are compositionally biased toward polar residues. The segment covering 531–542 (ISKEMLHEEKPS) has biased composition (basic and acidic residues). Asn-627 carries an N-linked (GlcNAc...) asparagine glycan. Disordered stretches follow at residues 657–908 (QQGG…PHAP), 1036–1059 (APPA…QPPL), and 1085–1118 (PVTR…TPVD). Basic and acidic residues predominate over residues 669–714 (VSEKRELPEEEVTRVTKDASDEGQEVRKTGQTDSIEGRGFRPKEPN). Residues 715–730 (PEDEDYSPEELLEDEN) are compositionally biased toward acidic residues. 4 stretches are compositionally biased toward basic and acidic residues: residues 736-751 (QSKE…RLDV), 766-789 (TDPE…KNET), 842-859 (SQKK…EGHP), and 868-884 (PGVE…EKFV). Ser-873 bears the Phosphoserine mark. An intramembrane segment occupies 1142–1162 (AIAFIYSLVFHLTKTLLATLP). The Lumenal segment spans residues 1163–1173 (DDVQPGPDFYG). The chain crosses the membrane as a helical span at residues 1174-1194 (LPWKPVLITASLGIVSFAVFF). The Cytoplasmic portion of the chain corresponds to 1195 to 1905 (WRTVLAVKSR…DCSPALKQSP (711 aa)). The segment at 1208–1647 (VTEQQISEKL…VIVKPMPGRP (440 aa)) is mediates interaction with MIA2. The stretch at 1211-1393 (QQISEKLKNI…SQKDLEVALT (183 aa)) forms a coiled coil. The tract at residues 1416–1443 (SESEDQNKGGSESDELANGEVGGDRSEK) is disordered. At Ser-1428 the chain carries Phosphoserine. The stretch at 1484–1636 (NLEDQIKKLE…TQKMAMMQEE (153 aa)) forms a coiled coil. Residues 1639–1905 (IVKPMPGRPN…DCSPALKQSP (267 aa)) form a disordered region. Residues 1647–1664 (PNTQNPPRRGPLSQNGSF) show a composition bias toward polar residues. Ser-1663, Ser-1675, Ser-1703, Ser-1724, Ser-1738, and Ser-1742 each carry phosphoserine. The proline-rich domain (PRD); mediates interaction with the COPII coat subunits SEC23A and SEC23B stretch occupies residues 1748–1905 (DEGKVSMAAK…DCSPALKQSP (158 aa)). Pro residues predominate over residues 1776 to 1806 (LLPPIRYGPPPQLCGPFGPRPLPPPFGPGMR). Residue Arg-1781 is modified to Asymmetric dimethylarginine. The segment at 1785–1845 (PPQLCGPFGP…GHAPFRPLGS (61 aa)) is SEC16A-interacting region (SIR); required for its localization to endoplasmic reticulum exit sites and for its interaction with SEC16A. The segment covering 1821–1831 (GKRDLPLDPRE) has biased composition (basic and acidic residues). Ser-1890 and Ser-1904 each carry phosphoserine. The segment covering 1891 to 1905 (QGASQDCSPALKQSP) has biased composition (polar residues).

Belongs to the MIA/OTOR family. Tango1 subfamily. Interacts with MIA2. Interacts (via SH3 domain) with COL7A1. Interacts with the COPII coat subunits SEC23A, SEC23B and maybe SEC24C. May interact with APOB and MIA2. Interacts with SEC16A.

Its subcellular location is the endoplasmic reticulum membrane. Plays a role in the transport of cargos that are too large to fit into COPII-coated vesicles and require specific mechanisms to be incorporated into membrane-bound carriers and exported from the endoplasmic reticulum. This protein is required for collagen VII (COL7A1) secretion by loading COL7A1 into transport carriers. It may participate in cargo loading of COL7A1 at endoplasmic reticulum exit sites by binding to COPII coat subunits Sec23/24 and guiding SH3-bound COL7A1 into a growing carrier. Does not play a role in global protein secretion and is apparently specific to COL7A1 cargo loading. However, it may participate in secretion of other proteins in cells that do not secrete COL7A1. It is also specifically required for the secretion of lipoproteins by participating in their export from the endoplasmic reticulum. Required for correct assembly of COPII coat components at endoplasmic reticulum exit sites (ERES) and for the localization of SEC16A and membrane-bound ER-resident complexes consisting of MIA2 and PREB/SEC12 to ERES. This is Transport and Golgi organization protein 1 homolog from Bos taurus (Bovine).